The sequence spans 367 residues: 2-aminoethylphosphonate--pyruvate transaminase (367 aa).

K194 carries the post-translational modification N6-(pyridoxal phosphate)lysine.

It belongs to the class-V pyridoxal-phosphate-dependent aminotransferase family. PhnW subfamily. As to quaternary structure, homodimer. Pyridoxal 5'-phosphate is required as a cofactor.

The enzyme catalyses (2-aminoethyl)phosphonate + pyruvate = phosphonoacetaldehyde + L-alanine. Involved in phosphonate degradation. This is 2-aminoethylphosphonate--pyruvate transaminase from Salmonella heidelberg (strain SL476).